Here is a 557-residue protein sequence, read N- to C-terminus: TWiK family of potassium channels protein 7 (557 aa).

Disordered stretches follow at residues Met-1 to Leu-34 and Asp-128 to Glu-151. The Cytoplasmic portion of the chain corresponds to Met-1 to His-165. Residues Asp-134–Glu-151 show a composition bias toward acidic residues. Residues Val-166 to Val-186 traverse the membrane as a helical segment. Asn-220 and Asn-237 each carry an N-linked (GlcNAc...) asparagine glycan. The pore-forming intramembrane region spans Ser-270–Thr-290. Residues Ile-295–Leu-315 traverse the membrane as a helical segment. The Cytoplasmic segment spans residues Gly-316–Arg-368. The chain crosses the membrane as a helical span at residues Ile-369–Met-389. The pore-forming intramembrane region spans Phe-397–Met-417. A helical transmembrane segment spans residues Ile-426–Gly-446. The Cytoplasmic portion of the chain corresponds to Val-447–Lys-557.

The protein belongs to the two pore domain potassium channel (TC 1.A.1.8) family.

It localises to the membrane. In Caenorhabditis elegans, this protein is TWiK family of potassium channels protein 7 (twk-7).